Consider the following 168-residue polypeptide: Large ribosomal subunit protein uL24 (168 aa).

A disordered region spans residues 112–168; that stretch reads LEGKDPRKQPKEAPKAAEKPAKEEPKKETPKAEEKPAKEEPKETKVEKKSEEKEDEN.

Belongs to the universal ribosomal protein uL24 family. Part of the 50S ribosomal subunit.

One of two assembly initiator proteins, it binds directly to the 5'-end of the 23S rRNA, where it nucleates assembly of the 50S subunit. Functionally, located at the polypeptide exit tunnel on the outside of the subunit. The polypeptide is Large ribosomal subunit protein uL24 (Nitrosopumilus maritimus (strain SCM1)).